A 162-amino-acid chain; its full sequence is Transcription elongation factor GreA (162 aa).

The stretch at 44-69 forms a coiled coil; the sequence is SENAEYEAAREKQAFVEARIKHLEDI.

The protein belongs to the GreA/GreB family.

Necessary for efficient RNA polymerase transcription elongation past template-encoded arresting sites. The arresting sites in DNA have the property of trapping a certain fraction of elongating RNA polymerases that pass through, resulting in locked ternary complexes. Cleavage of the nascent transcript by cleavage factors such as GreA or GreB allows the resumption of elongation from the new 3'terminus. GreA releases sequences of 2 to 3 nucleotides. The chain is Transcription elongation factor GreA from Rickettsia bellii (strain RML369-C).